A 314-amino-acid chain; its full sequence is tRNA pseudouridine synthase B (314 aa).

Asp41 acts as the Nucleophile in catalysis.

It belongs to the pseudouridine synthase TruB family. Type 1 subfamily.

The enzyme catalyses uridine(55) in tRNA = pseudouridine(55) in tRNA. Its function is as follows. Responsible for synthesis of pseudouridine from uracil-55 in the psi GC loop of transfer RNAs. The sequence is that of tRNA pseudouridine synthase B from Prochlorococcus marinus (strain NATL2A).